The sequence spans 1216 residues: DNA polymerase subunit gamma-1 (1216 aa).

The segment covering 27-37 (SSSVLDPVPSD) has biased composition (low complexity). Residues 27–50 (SSSVLDPVPSDGQPQSQMPSSENG) form a disordered region. Polar residues predominate over residues 38–50 (GQPQSQMPSSENG). Positions 179–183 (VFDVE) match the Exo I motif. The active-site Exonuclease activity is Asp181. Positions 250 to 258 (VGHNVSFDR) match the Exo II motif. DNA is bound at residue Ser289. Over residues 301–314 (GKHKTQHPTKRGQK) the composition is skewed to basic residues. The tract at residues 301–321 (GKHKTQHPTKRGQKSQKNANG) is disordered. The Exo III signature appears at 377 to 385 (YCARDVWAT). Residues 488-518 (TASASKLPIEGAGPFGDPMDQEDPGPPSEEE) are disordered. The segment at 491–552 (ASKLPIEGAG…RPQHLPGHPG (62 aa)) is accessory-interacting determinant. Positions 506 to 518 (MDQEDPGPPSEEE) are enriched in acidic residues. Arg560 serves as a coordination point for RNA. Ser574 is a DNA binding site. The RNA site is built by His731, Gly740, and Lys745. The DNA site is built by Lys783 and Thr826. The segment at 835–841 (TWLTASN) is trigger loop. The RNA site is built by Ser840 and Arg846. The Pol A signature appears at 864 to 873 (VGADVDSQEL). The a 2'-deoxyribonucleoside 5'-triphosphate site is built by Asp867, Val868, Ser870, Glu872, Arg920, Lys924, and Tyr928. The Mg(2+) site is built by Asp867 and Val868. A Pol B motif is present at residues 920–935 (REHAKVFNYGRIYGAG). Positions 1071 and 1072 each coordinate DNA. A Pol C motif is present at residues 1111 to 1118 (HDEVRYLV). An a 2'-deoxyribonucleoside 5'-triphosphate-binding site is contributed by Asp1112. Asp1112 contributes to the Mg(2+) binding site.

This sequence belongs to the DNA polymerase type-A family. In terms of assembly, heterotrimer composed of a catalytic subunit and a homodimer of accessory subunits (POLG:POLG2). Interacts with TTC3. Interacts with LIG3. The cofactor is Mg(2+).

It is found in the mitochondrion. The protein localises to the mitochondrion matrix. It localises to the mitochondrion nucleoid. It carries out the reaction DNA(n) + a 2'-deoxyribonucleoside 5'-triphosphate = DNA(n+1) + diphosphate. It catalyses the reaction a 3'-end 2'-deoxyribonucleotidyl-deoxyribonucleotide-DNA + H2O = a 3'-end 2'-deoxyribonucleotide-DNA + a 2'-deoxyribonucleoside 5'-phosphate + H(+). The enzyme catalyses a 5'-end 2'-deoxyribose-2'-deoxyribonucleotide-DNA = (2E,4S)-4-hydroxypenten-2-al-5-phosphate + a 5'-end 5'-phospho-2'-deoxyribonucleoside-DNA + H(+). Inhibited by dideoxynucleotides such as antiviral agent zalcitabine. Its function is as follows. Catalytic subunit of DNA polymerase gamma solely responsible for replication of mitochondrial DNA (mtDNA). Replicates both heavy and light strands of the circular mtDNA genome using a single-stranded DNA template, RNA primers and the four deoxyribonucleoside triphosphates as substrates. Has 5' -&gt; 3' polymerase activity. Functionally interacts with TWNK and SSBP1 at the replication fork to form a highly processive replisome, where TWNK unwinds the double-stranded DNA template prior to replication and SSBP1 covers the parental heavy strand to enable continuous replication of the entire mitochondrial genome. A single nucleotide incorporation cycle includes binding of the incoming nucleotide at the insertion site, a phosphodiester bond formation reaction that extends the 3'-end of the primer DNA, and translocation of the primer terminus to the post-insertion site. After completing replication of a mtDNA strand, mediates 3' -&gt; 5' exonucleolytic degradation at the nick to enable proper ligation. Highly accurate due to high nucleotide selectivity and 3' -&gt; 5' exonucleolytic proofreading. Proficiently corrects base substitutions, single-base additions and deletions in non-repetitive sequences and short repeats, but displays lower proofreading activity when replicating longer homopolymeric stretches. Exerts exonuclease activity toward single-stranded DNA and double-stranded DNA containing 3'-terminal mispairs. When a misincorporation occurs, transitions from replication to a pro-nucleolytic editing mode and removes the missincorporated nucleoside in the exonuclease active site. Proceeds via an SN2 nucleolytic mechanism in which Asp-198 catalyzes phosphodiester bond hydrolysis and Glu-200 stabilizes the leaving group. As a result the primer strand becomes one nucleotide shorter and is positioned in the post-insertion site, ready to resume DNA synthesis. Exerts 5'-deoxyribose phosphate (dRP) lyase activity and mediates repair-associated mtDNA synthesis (gap filling) in base-excision repair pathway. Catalyzes the release of the 5'-terminal 2-deoxyribose-5-phosphate sugar moiety from incised apurinic/apyrimidinic (AP) sites to produce a substrate for DNA ligase. The dRP lyase reaction does not require divalent metal ions and likely proceeds via a Schiff base intermediate in a beta-elimination reaction mechanism. The sequence is that of DNA polymerase subunit gamma-1 from Rattus norvegicus (Rat).